A 213-amino-acid polypeptide reads, in one-letter code: Adenylate kinase (213 aa).

Residue 10-15 (GSGKGT) participates in ATP binding. The interval 30-59 (STGDLFRTNIENDTPLGKEIKQIVENGQLV) is NMP. Residues Thr-31, Arg-36, 57–59 (QLV), 85–88 (GFPR), and Gln-92 contribute to the AMP site. The interval 121 to 158 (GRRICQSCCKIFNIYTLPTKEKEICDFCQGILYQRKDD) is LID. Residue Arg-122 coordinates ATP. 2 residues coordinate Zn(2+): Cys-125 and Cys-128. 131–132 (IF) is a binding site for ATP. 2 residues coordinate Zn(2+): Cys-145 and Cys-148. AMP-binding residues include Arg-155 and Arg-166. Lys-194 contributes to the ATP binding site.

The protein belongs to the adenylate kinase family. Monomer.

It localises to the cytoplasm. It carries out the reaction AMP + ATP = 2 ADP. Its pathway is purine metabolism; AMP biosynthesis via salvage pathway; AMP from ADP: step 1/1. Functionally, catalyzes the reversible transfer of the terminal phosphate group between ATP and AMP. Plays an important role in cellular energy homeostasis and in adenine nucleotide metabolism. This is Adenylate kinase from Borrelia duttonii (strain Ly).